The sequence spans 431 residues: Histidinol dehydrogenase (431 aa).

NAD(+) is bound by residues Tyr-127, Gln-189, and Asn-212. Residues Ser-237, Gln-259, and His-262 each contribute to the substrate site. 2 residues coordinate Zn(2+): Gln-259 and His-262. Residues Glu-326 and His-327 each act as proton acceptor in the active site. His-327, Asp-360, Glu-414, and His-419 together coordinate substrate. Asp-360 contributes to the Zn(2+) binding site. Residue His-419 participates in Zn(2+) binding.

This sequence belongs to the histidinol dehydrogenase family. Zn(2+) is required as a cofactor.

The enzyme catalyses L-histidinol + 2 NAD(+) + H2O = L-histidine + 2 NADH + 3 H(+). Its pathway is amino-acid biosynthesis; L-histidine biosynthesis; L-histidine from 5-phospho-alpha-D-ribose 1-diphosphate: step 9/9. Its function is as follows. Catalyzes the sequential NAD-dependent oxidations of L-histidinol to L-histidinaldehyde and then to L-histidine. The polypeptide is Histidinol dehydrogenase (Xylella fastidiosa (strain Temecula1 / ATCC 700964)).